The primary structure comprises 495 residues: uncharacterized protein (495 aa).

It is found in the cytoplasm. The protein resides in the nucleus. This is an uncharacterized protein from Saccharomyces cerevisiae (strain ATCC 204508 / S288c) (Baker's yeast).